A 367-amino-acid chain; its full sequence is MKEPLDLSKYSIRTDLAVEAHQMLQESQEEQKGIQGVIVKEREEEGTIITKVTIDEAASEAMGKKPGNYLTLEVQGIRQQDTELQQKVERIFAKEFSCFLEEVGVTKEASCLIVGLGNWNVTPDALGPIVVENVLVTRHLFQLQPESVEEGFRPVSAIRPGVMGITGIETSDVIYGIIEKTNPDFVIAIDALAARSIERVNSTIQISDTGIHPGSGVGNKRKELSKDTLGIPVIAIGVPTVVDAVSITSDTIDFILKHFGREMKEGNKPSRSLLPAGFSFGEKKQLTQEDMPDEKSRNMFLGVVGTLEEEEKRRLIYEVLSLLGHNLMVPPKEVDSFIEDMANVIASGLNAALHHQIDQDNTGAYTH.

Residues 1–15 constitute a propeptide that is removed on maturation; sequence MKEPLDLSKYSIRTD.

Belongs to the peptidase A25 family. In terms of assembly, homotetramer. Autoproteolytically processed. The inactive tetrameric zymogen termed p46 autoprocesses to a smaller form termed p41, which is active only during spore germination.

The enzyme catalyses Endopeptidase action with P4 Glu or Asp, P1 preferably Glu &gt; Asp, P1' hydrophobic and P2' Ala.. In terms of biological role, initiates the rapid degradation of small, acid-soluble proteins during spore germination. In Bacillus cereus (strain ATCC 14579 / DSM 31 / CCUG 7414 / JCM 2152 / NBRC 15305 / NCIMB 9373 / NCTC 2599 / NRRL B-3711), this protein is Germination protease.